A 379-amino-acid chain; its full sequence is Putative clathrin assembly protein At1g68110 (379 aa).

Residues asparagine 26–leucine 158 enclose the ENTH domain.

It localises to the membrane. The protein resides in the clathrin-coated pit. The protein localises to the golgi apparatus. It is found in the cytoplasmic vesicle. Its subcellular location is the clathrin-coated vesicle. This chain is Putative clathrin assembly protein At1g68110, found in Arabidopsis thaliana (Mouse-ear cress).